We begin with the raw amino-acid sequence, 670 residues long: DNA ligase (670 aa).

NAD(+) contacts are provided by residues 32–36 (DAEYD), 81–82 (SL), and glutamate 113. Catalysis depends on lysine 115, which acts as the N6-AMP-lysine intermediate. NAD(+) is bound by residues arginine 136, glutamate 173, lysine 290, and lysine 314. Zn(2+)-binding residues include cysteine 408, cysteine 411, cysteine 426, and cysteine 432. A BRCT domain is found at 592-670 (EIDSPFAGKT…EAEMIRLLGE (79 aa)).

Belongs to the NAD-dependent DNA ligase family. LigA subfamily. Mg(2+) is required as a cofactor. It depends on Mn(2+) as a cofactor.

The catalysed reaction is NAD(+) + (deoxyribonucleotide)n-3'-hydroxyl + 5'-phospho-(deoxyribonucleotide)m = (deoxyribonucleotide)n+m + AMP + beta-nicotinamide D-nucleotide.. In terms of biological role, DNA ligase that catalyzes the formation of phosphodiester linkages between 5'-phosphoryl and 3'-hydroxyl groups in double-stranded DNA using NAD as a coenzyme and as the energy source for the reaction. It is essential for DNA replication and repair of damaged DNA. This Yersinia pseudotuberculosis serotype IB (strain PB1/+) protein is DNA ligase.